A 171-amino-acid chain; its full sequence is Lipoprotein signal peptidase (171 aa).

The next 3 membrane-spanning stretches (helical) occupy residues 7–27 (GLLA…GLYF), 64–84 (IGRW…GLWM), and 88–108 (TSRL…GNAI). Residues D118 and D136 contribute to the active site. Residues 128–148 (SWYVFNVADAAIVAGVIGLIL) form a helical membrane-spanning segment.

This sequence belongs to the peptidase A8 family.

The protein localises to the cell inner membrane. The catalysed reaction is Release of signal peptides from bacterial membrane prolipoproteins. Hydrolyzes -Xaa-Yaa-Zaa-|-(S,diacylglyceryl)Cys-, in which Xaa is hydrophobic (preferably Leu), and Yaa (Ala or Ser) and Zaa (Gly or Ala) have small, neutral side chains.. Its pathway is protein modification; lipoprotein biosynthesis (signal peptide cleavage). Functionally, this protein specifically catalyzes the removal of signal peptides from prolipoproteins. This is Lipoprotein signal peptidase from Methylobacterium radiotolerans (strain ATCC 27329 / DSM 1819 / JCM 2831 / NBRC 15690 / NCIMB 10815 / 0-1).